The chain runs to 178 residues: Gamma-crystallin S (178 aa).

The residue at position 2 (S2) is an N-acetylserine. An N-terminal arm region spans residues 2–5 (SKSG). 2 Beta/gamma crystallin 'Greek key' domains span residues 6–44 (TKIT…RVEG) and 45–87 (GTWA…RAVH). Positions 88-93 (LSSGGQ) are connecting peptide. Beta/gamma crystallin 'Greek key' domains follow at residues 94 to 134 (YKIQ…KVLD) and 135 to 177 (GVWI…RRIV).

It belongs to the beta/gamma-crystallin family. As to quaternary structure, monomer.

In terms of biological role, crystallins are the dominant structural components of the vertebrate eye lens. This Canis lupus familiaris (Dog) protein is Gamma-crystallin S (CRYGS).